The chain runs to 537 residues: Di/tripeptide-binding protein 1 (537 aa).

An N-terminal signal peptide occupies residues 1-29 (MRRNAVIRSAIMPSLLGAALVAAVPQAFA).

It belongs to the bacterial solute-binding protein 5 family. As to quaternary structure, the complex is composed of two ATP-binding proteins (DppD and DppF), two transmembrane proteins (DppB and DppC) and a solute-binding protein (DppA1). Five orthologous SBPs (DppA1-A5) are present in P.aeruginosa, which increases the substrate specificity of the DppBCDF transporter.

In terms of biological role, part of the ABC transporter DppABCDF involved in the uptake of various di/tripeptides. Prefers dipeptides with acidic residues at the C-terminal end. Involved in the uptake of phaseolotoxin, a toxic tripeptide inhibiting the enzyme ornithine carbamoyltransferase. The sequence is that of Di/tripeptide-binding protein 1 from Pseudomonas aeruginosa (strain UCBPP-PA14).